Here is a 1203-residue protein sequence, read N- to C-terminus: DNA-directed RNA polymerase subunit beta (1203 aa).

A compositionally biased stretch (basic and acidic residues) spans 1174–1195; it reads AAQEAKAAFEAEEAEKATKAEA. The interval 1174-1203 is disordered; the sequence is AAQEAKAAFEAEEAEKATKAEATEEAAEQE.

It belongs to the RNA polymerase beta chain family. The RNAP catalytic core consists of 2 alpha, 1 beta, 1 beta' and 1 omega subunit. When a sigma factor is associated with the core the holoenzyme is formed, which can initiate transcription.

It carries out the reaction RNA(n) + a ribonucleoside 5'-triphosphate = RNA(n+1) + diphosphate. Its function is as follows. DNA-dependent RNA polymerase catalyzes the transcription of DNA into RNA using the four ribonucleoside triphosphates as substrates. The polypeptide is DNA-directed RNA polymerase subunit beta (Streptococcus pneumoniae (strain JJA)).